A 457-amino-acid polypeptide reads, in one-letter code: Methylenetetrahydrofolate--tRNA-(uracil-5-)-methyltransferase TrmFO (457 aa).

Residue 8–13 participates in FAD binding; it reads GGGLAG.

This sequence belongs to the MnmG family. TrmFO subfamily. The cofactor is FAD.

It localises to the cytoplasm. The enzyme catalyses uridine(54) in tRNA + (6R)-5,10-methylene-5,6,7,8-tetrahydrofolate + NADH + H(+) = 5-methyluridine(54) in tRNA + (6S)-5,6,7,8-tetrahydrofolate + NAD(+). It carries out the reaction uridine(54) in tRNA + (6R)-5,10-methylene-5,6,7,8-tetrahydrofolate + NADPH + H(+) = 5-methyluridine(54) in tRNA + (6S)-5,6,7,8-tetrahydrofolate + NADP(+). Catalyzes the folate-dependent formation of 5-methyl-uridine at position 54 (M-5-U54) in all tRNAs. This chain is Methylenetetrahydrofolate--tRNA-(uracil-5-)-methyltransferase TrmFO, found in Thermosynechococcus vestitus (strain NIES-2133 / IAM M-273 / BP-1).